The sequence spans 444 residues: Deoxyguanosinetriphosphate triphosphohydrolase-like protein (444 aa).

The disordered stretch occupies residues 1–28 (MTDAVWNERRLGEDKQRRNDHRSPYQRD). The HD domain maps to 59–250 (RLTHSLEVSQ…MELADDIAYA (192 aa)).

The protein belongs to the dGTPase family. Type 2 subfamily.

This chain is Deoxyguanosinetriphosphate triphosphohydrolase-like protein, found in Shewanella pealeana (strain ATCC 700345 / ANG-SQ1).